An 86-amino-acid polypeptide reads, in one-letter code: Large ribosomal subunit protein bL28 (86 aa).

It belongs to the bacterial ribosomal protein bL28 family.

The sequence is that of Large ribosomal subunit protein bL28 from Bacteroides fragilis (strain ATCC 25285 / DSM 2151 / CCUG 4856 / JCM 11019 / LMG 10263 / NCTC 9343 / Onslow / VPI 2553 / EN-2).